A 355-amino-acid polypeptide reads, in one-letter code: 1D-myo-inositol 2-acetamido-2-deoxy-alpha-D-glucopyranoside deacetylase 3 (355 aa).

Positions 31, 34, and 169 each coordinate Zn(2+).

It belongs to the MshB deacetylase family. It depends on Zn(2+) as a cofactor.

The catalysed reaction is 1D-myo-inositol 2-acetamido-2-deoxy-alpha-D-glucopyranoside + H2O = 1D-myo-inositol 2-amino-2-deoxy-alpha-D-glucopyranoside + acetate. Catalyzes the deacetylation of 1D-myo-inositol 2-acetamido-2-deoxy-alpha-D-glucopyranoside (GlcNAc-Ins) in the mycothiol biosynthesis pathway. This Catenulispora acidiphila (strain DSM 44928 / JCM 14897 / NBRC 102108 / NRRL B-24433 / ID139908) protein is 1D-myo-inositol 2-acetamido-2-deoxy-alpha-D-glucopyranoside deacetylase 3.